The sequence spans 594 residues: Spermidine/putrescine import ATP-binding protein PotA (594 aa).

In terms of domain architecture, ABC transporter spans 24-435; that stretch reads IEIKKINKTY…PANNWVANFI (412 aa). 57 to 64 provides a ligand contact to ATP; the sequence is GPSGCGKT. An insert region spans residues 125 to 304; the sequence is RKPIENVSAD…EWFDKKKLTR (180 aa).

This sequence belongs to the ABC transporter superfamily. Spermidine/putrescine importer (TC 3.A.1.11.1) family. As to quaternary structure, the complex is composed of two ATP-binding proteins (PotA), two transmembrane proteins (PotB and PotC) and a solute-binding protein (PotD).

It is found in the cell membrane. The catalysed reaction is ATP + H2O + polyamine-[polyamine-binding protein]Side 1 = ADP + phosphate + polyamineSide 2 + [polyamine-binding protein]Side 1.. In terms of biological role, part of the ABC transporter complex PotABCD involved in spermidine/putrescine import. Responsible for energy coupling to the transport system. This Malacoplasma penetrans (strain HF-2) (Mycoplasma penetrans) protein is Spermidine/putrescine import ATP-binding protein PotA.